A 507-amino-acid polypeptide reads, in one-letter code: ATP synthase subunit alpha, chloroplastic (507 aa).

170–177 (GDRQTGKT) provides a ligand contact to ATP. Threonine 257 carries the post-translational modification Phosphothreonine.

This sequence belongs to the ATPase alpha/beta chains family. F-type ATPases have 2 components, CF(1) - the catalytic core - and CF(0) - the membrane proton channel. CF(1) has five subunits: alpha(3), beta(3), gamma(1), delta(1), epsilon(1). CF(0) has four main subunits: a, b, b' and c.

The protein localises to the plastid. It localises to the chloroplast thylakoid membrane. The catalysed reaction is ATP + H2O + 4 H(+)(in) = ADP + phosphate + 5 H(+)(out). Its function is as follows. Produces ATP from ADP in the presence of a proton gradient across the membrane. The alpha chain is a regulatory subunit. The sequence is that of ATP synthase subunit alpha, chloroplastic from Crucihimalaya wallichii (Rock-cress).